A 465-amino-acid chain; its full sequence is Adenosylhomocysteinase (465 aa).

Substrate contacts are provided by Thr-56, Asp-131, and Glu-191. An NAD(+)-binding site is contributed by 192-194; it reads TTT. Substrate contacts are provided by Lys-221 and Asp-225. Residues Asn-226, 255–260, Glu-278, Asn-313, 334–336, and Asn-379 each bind NAD(+); these read GYGNVG and IGH.

The protein belongs to the adenosylhomocysteinase family. NAD(+) is required as a cofactor.

It is found in the cytoplasm. It catalyses the reaction S-adenosyl-L-homocysteine + H2O = L-homocysteine + adenosine. The protein operates within amino-acid biosynthesis; L-homocysteine biosynthesis; L-homocysteine from S-adenosyl-L-homocysteine: step 1/1. In terms of biological role, may play a key role in the regulation of the intracellular concentration of adenosylhomocysteine. This chain is Adenosylhomocysteinase, found in Bartonella quintana (strain Toulouse) (Rochalimaea quintana).